Reading from the N-terminus, the 102-residue chain is Large ribosomal subunit protein bL28 (102 aa).

Belongs to the bacterial ribosomal protein bL28 family.

The protein is Large ribosomal subunit protein bL28 of Bradyrhizobium diazoefficiens (strain JCM 10833 / BCRC 13528 / IAM 13628 / NBRC 14792 / USDA 110).